Reading from the N-terminus, the 476-residue chain is Sulfate adenylyltransferase subunit 1 (476 aa).

The tr-type G domain occupies 24–243 (KSLLRFLTCG…VDVEKEKEAG (220 aa)). Residues 33–40 (GSVDDGKS) are G1. A GTP-binding site is contributed by 33 to 40 (GSVDDGKS). The segment at 91–95 (GITID) is G2. Residues 112–115 (DTPG) are G3. GTP is bound by residues 112–116 (DTPGH) and 167–170 (NKMD). Residues 167-170 (NKMD) form a G4 region. The G5 stretch occupies residues 205 to 207 (SAL).

It belongs to the TRAFAC class translation factor GTPase superfamily. Classic translation factor GTPase family. CysN/NodQ subfamily. In terms of assembly, heterodimer composed of CysD, the smaller subunit, and CysN.

It catalyses the reaction sulfate + ATP + H(+) = adenosine 5'-phosphosulfate + diphosphate. The protein operates within sulfur metabolism; hydrogen sulfide biosynthesis; sulfite from sulfate: step 1/3. With CysD forms the ATP sulfurylase (ATPS) that catalyzes the adenylation of sulfate producing adenosine 5'-phosphosulfate (APS) and diphosphate, the first enzymatic step in sulfur assimilation pathway. APS synthesis involves the formation of a high-energy phosphoric-sulfuric acid anhydride bond driven by GTP hydrolysis by CysN coupled to ATP hydrolysis by CysD. This chain is Sulfate adenylyltransferase subunit 1, found in Vibrio vulnificus (strain YJ016).